A 217-amino-acid chain; its full sequence is Membrane-associated progesterone receptor component 2 (217 aa).

Ser15 carries O-linked (Xyl...) (chondroitin sulfate) serine glycosylation. The helical transmembrane segment at 40-62 (ALLATGGEMLLNVALVALVLLGA) threads the bilayer. Ser84, Ser98, and Ser202 each carry phosphoserine. The Cytochrome b5 heme-binding domain maps to 96–195 (DFSLEQLRQY…EKYDYVGRLL (100 aa)). The segment at 196–217 (KPGEEPSEYTDEEDTKDHSKQD) is disordered. Acidic residues predominate over residues 200–209 (EPSEYTDEED). At Tyr204 the chain carries Phosphotyrosine. Thr205 is subject to Phosphothreonine.

The protein belongs to the cytochrome b5 family. MAPR subfamily. As to quaternary structure, interacts with PGRMC1. Interacts with AAAS.

It is found in the membrane. Its subcellular location is the nucleus envelope. The protein resides in the endoplasmic reticulum. The protein localises to the secreted. Its function is as follows. Required for the maintenance of uterine histoarchitecture and normal female reproductive lifespan. May serve as a universal non-classical progesterone receptor in the uterus. Intracellular heme chaperone required for delivery of labile, or signaling heme, to the nucleus. Plays a role in adipocyte function and systemic glucose homeostasis. In brown fat, which has a high demand for heme, delivery of labile heme in the nucleus regulates the activity of heme-responsive transcriptional repressors such as NR1D1 and BACH1. The sequence is that of Membrane-associated progesterone receptor component 2 from Rattus norvegicus (Rat).